Reading from the N-terminus, the 310-residue chain is Zinc transporter ZIP9 (310 aa).

Helical transmembrane passes span 7-27 (ISLL…IPLA), 35-55 (LKLI…AVII), 108-128 (ACIG…DQIG), 148-168 (ITTT…LGAA), 178-198 (LIVF…LVSF), 212-232 (HLLV…LGLS), 246-266 (GVAM…HVLP), and 289-309 (VEVV…VGHH).

This sequence belongs to the ZIP transporter (TC 2.A.5) family. Expressed in brain, liver, ovary, and testis.

The protein localises to the golgi apparatus. It localises to the trans-Golgi network membrane. The protein resides in the cell membrane. It is found in the cytoplasm. Its subcellular location is the perinuclear region. The protein localises to the mitochondrion. It localises to the nucleus. The enzyme catalyses Zn(2+)(in) = Zn(2+)(out). Has dual functions as a membrane-bound androgen receptor and as an androgen-dependent zinc transporter both of which are mediated through G protein activation and are required for the androgen-dependent apoptotic response. Upon androgen binding, mediates apoptosis by directly activating a stimulatory G protein that leads to increased cAMP levels and MAP kinase activity and which is accompanied by increased intracellular free zinc levels. The sequence is that of Zinc transporter ZIP9 from Micropogonias undulatus (Atlantic croaker).